Here is a 314-residue protein sequence, read N- to C-terminus: 4-hydroxy-3-methylbut-2-enyl diphosphate reductase (314 aa).

Residue cysteine 18 coordinates [4Fe-4S] cluster. (2E)-4-hydroxy-3-methylbut-2-enyl diphosphate-binding residues include histidine 47 and histidine 80. Histidine 47 and histidine 80 together coordinate dimethylallyl diphosphate. Positions 47 and 80 each coordinate isopentenyl diphosphate. Residue cysteine 102 coordinates [4Fe-4S] cluster. Residue histidine 130 participates in (2E)-4-hydroxy-3-methylbut-2-enyl diphosphate binding. Histidine 130 is a dimethylallyl diphosphate binding site. Histidine 130 provides a ligand contact to isopentenyl diphosphate. Glutamate 132 (proton donor) is an active-site residue. Threonine 171 contributes to the (2E)-4-hydroxy-3-methylbut-2-enyl diphosphate binding site. Residue cysteine 201 participates in [4Fe-4S] cluster binding. Positions 229, 230, 231, and 273 each coordinate (2E)-4-hydroxy-3-methylbut-2-enyl diphosphate. The dimethylallyl diphosphate site is built by serine 229, serine 230, asparagine 231, and serine 273. Positions 229, 230, 231, and 273 each coordinate isopentenyl diphosphate.

Belongs to the IspH family. Requires [4Fe-4S] cluster as cofactor.

The catalysed reaction is isopentenyl diphosphate + 2 oxidized [2Fe-2S]-[ferredoxin] + H2O = (2E)-4-hydroxy-3-methylbut-2-enyl diphosphate + 2 reduced [2Fe-2S]-[ferredoxin] + 2 H(+). The enzyme catalyses dimethylallyl diphosphate + 2 oxidized [2Fe-2S]-[ferredoxin] + H2O = (2E)-4-hydroxy-3-methylbut-2-enyl diphosphate + 2 reduced [2Fe-2S]-[ferredoxin] + 2 H(+). Its pathway is isoprenoid biosynthesis; dimethylallyl diphosphate biosynthesis; dimethylallyl diphosphate from (2E)-4-hydroxy-3-methylbutenyl diphosphate: step 1/1. The protein operates within isoprenoid biosynthesis; isopentenyl diphosphate biosynthesis via DXP pathway; isopentenyl diphosphate from 1-deoxy-D-xylulose 5-phosphate: step 6/6. In terms of biological role, catalyzes the conversion of 1-hydroxy-2-methyl-2-(E)-butenyl 4-diphosphate (HMBPP) into a mixture of isopentenyl diphosphate (IPP) and dimethylallyl diphosphate (DMAPP). Acts in the terminal step of the DOXP/MEP pathway for isoprenoid precursor biosynthesis. This chain is 4-hydroxy-3-methylbut-2-enyl diphosphate reductase, found in Phenylobacterium zucineum (strain HLK1).